The sequence spans 78 residues: Acyl carrier protein (78 aa).

One can recognise a Carrier domain in the interval Ser-2 to Val-77. Ser-37 is subject to O-(pantetheine 4'-phosphoryl)serine.

Belongs to the acyl carrier protein (ACP) family. In terms of processing, 4'-phosphopantetheine is transferred from CoA to a specific serine of apo-ACP by AcpS. This modification is essential for activity because fatty acids are bound in thioester linkage to the sulfhydryl of the prosthetic group.

The protein resides in the cytoplasm. It participates in lipid metabolism; fatty acid biosynthesis. Carrier of the growing fatty acid chain in fatty acid biosynthesis. This chain is Acyl carrier protein, found in Maricaulis maris (strain MCS10) (Caulobacter maris).